Reading from the N-terminus, the 396-residue chain is MSGAKRCPDCGSSEIVEDAHYSQDQLVCADCGCILSEGLITTTVSEETSLQAVRYSDSTGENDSVTYCMKRGIIRVRDLCRVLRLPDGFVDTALSYYKQAVGLPLYRLVSIEKKEIIVGCCVYITCRQQQWPITMGTICSLIYAKKELFASLFMDIVQVLKVDVPSISLQNLVKSHCRSFKLFKDSSEVPPQYAEKLDTVSERTVQTVELAYETWLVTGRHPIPMITAAAYISWQSFQPSRRLSCSLSRFCKLSDVDMPPPSTIRLKELQETLIKLAYHLPWLKILSLNRKNIVQHLGDLLKHRALLLRRALAVTEAELSKGTEASSSTDQLNSTLVFLPPCVSNPKKRSRSIAFPCGDLDITGDEEISDSEIEQYLRTPAEMKDYQQVQSCISSV.

The segment at 3 to 36 (GAKRCPDCGSSEIVEDAHYSQDQLVCADCGCILS) adopts a TFIIB-type zinc-finger fold. Zn(2+) contacts are provided by Cys-7, Cys-10, Cys-28, and Cys-31. The stretch at 173 to 249 (VKSHCRSFKL…SRRLSCSLSR (77 aa)) is repeat 2. Position 342 is a cysteine sulfenic acid (-SOH) (Cys-342).

The protein belongs to the TFIIB family. In terms of assembly, component of TFIIIB complexes. Interacts with TBP and forms a ternary complex with TBp and target DNA sequences. Post-translationally, in response to oxidative stress, a Cys-residue is reversibly oxidized to cysteine sulfenic acid. This impairs formation of a ternary complex with TBP and DNA and down-regulates expression of target genes in response to oxidative stress.

The protein resides in the nucleus. Functionally, general activator of RNA polymerase III transcription. Factor exclusively required for RNA polymerase III transcription of genes with promoter elements upstream of the initiation sites. Contributes to the regulation of gene expression; functions as activator in the absence of oxidative stress. Down-regulates expression of target genes in response to oxidative stress. Overexpression protects cells against apoptosis in response to oxidative stress. This is Transcription factor IIIB 50 kDa subunit (brf2) from Xenopus laevis (African clawed frog).